The sequence spans 401 residues: Elongation factor Tu 2 (401 aa).

One can recognise a tr-type G domain in the interval 10-209 (KPHVNVGTIG…AVDEYIPTPV (200 aa)). The interval 19-26 (GHVDHGKT) is G1. 19–26 (GHVDHGKT) contributes to the GTP binding site. Threonine 26 provides a ligand contact to Mg(2+). The tract at residues 60–64 (GITIA) is G2. A G3 region spans residues 81-84 (DCPG). GTP contacts are provided by residues 81–85 (DCPGH) and 136–139 (NKVD). The G4 stretch occupies residues 136 to 139 (NKVD). Positions 174–176 (SAL) are G5.

Belongs to the TRAFAC class translation factor GTPase superfamily. Classic translation factor GTPase family. EF-Tu/EF-1A subfamily. As to quaternary structure, monomer.

Its subcellular location is the cytoplasm. It catalyses the reaction GTP + H2O = GDP + phosphate + H(+). GTP hydrolase that promotes the GTP-dependent binding of aminoacyl-tRNA to the A-site of ribosomes during protein biosynthesis. The polypeptide is Elongation factor Tu 2 (Roseiflexus sp. (strain RS-1)).